We begin with the raw amino-acid sequence, 426 residues long: Tryptophan--tRNA ligase (426 aa).

The 'HIGH' region motif lies at 66–74 (PSGEMHLGN). A 'KMSKS' region motif is present at residues 314–318 (KMSSS).

It belongs to the class-I aminoacyl-tRNA synthetase family.

Its subcellular location is the cytoplasm. The enzyme catalyses tRNA(Trp) + L-tryptophan + ATP = L-tryptophyl-tRNA(Trp) + AMP + diphosphate + H(+). The polypeptide is Tryptophan--tRNA ligase (Thermoplasma volcanium (strain ATCC 51530 / DSM 4299 / JCM 9571 / NBRC 15438 / GSS1)).